Reading from the N-terminus, the 928-residue chain is Probable outer membrane protein pmp10 (928 aa).

Residues 1–25 (MKSQFSWLVLSSTLACFTSCSTVFA) form the signal peptide. The Autotransporter domain occupies 635–928 (TLCSDRGFWA…NVDLGGKFQF (294 aa)).

The protein belongs to the PMP outer membrane protein family.

The protein resides in the secreted. The protein localises to the cell wall. It is found in the cell outer membrane. This is Probable outer membrane protein pmp10 (pmp10) from Chlamydia pneumoniae (Chlamydophila pneumoniae).